A 637-amino-acid polypeptide reads, in one-letter code: Acyl-CoA ligase cm3C (637 aa).

ATP is bound by residues 282-290 (TSGTSGRQK), 423-428 (HAWGLT), Asp-507, Arg-526, and Lys-624. Positions 353-423 (DMQRMLGSVA…SLQPSWEFLH (71 aa)) are SBD1. The tract at residues 424–486 (AWGLTETCIV…YKAPNMFVGY (63 aa)) is SBD2.

The protein belongs to the ATP-dependent AMP-binding enzyme family.

It participates in secondary metabolite biosynthesis. In terms of biological role, acyl-CoA ligase; part of the gene cluster that mediates the biosynthesis of beauveriolides I and III, cyclodepsipeptides acting as inhibitors of the acyl-CoA:cholesterol acyltransferase. The HR-PKS cm3B initiates the biosynthesis of beauveriolides by iteratively catalyzing the formation of the linear polyketide chain. The ATP-dependent acetyl-CoA ligase cm3D converts the polyketide carboxylic acid to a CoA thioester which id shuttled to the first T domain in the NRPS cm3A by the acetyltransferase cm3C. Cm3A contains 13 domains and assembles the polyketide chain, L-phenylalanine, L-alanine, and D-leucine (or D-allo-isoleucine) to form beauveriolide I (or beauveriolide III). The production of both beauveriolides I and III suggests the substrate adaptability of cm3B, using different amino acids as substrates. This is Acyl-CoA ligase cm3C from Cordyceps militaris (strain CM01) (Caterpillar fungus).